A 324-amino-acid polypeptide reads, in one-letter code: Zinc finger C2HC domain-containing protein 1A (324 aa).

The C2HC/C3H-type 1 zinc finger occupies 15-44 (DLLPCKICGRTFFPLALKKHGPICQKTATK). Zn(2+) is bound by residues C19, C22, H34, and C38. The tract at residues 43 to 83 (TKKRKTFDSSRQRAEGTDIPTVKPLKPRPEPPKKPSNWRRK) is disordered. The segment covering 48-58 (TFDSSRQRAEG) has biased composition (basic and acidic residues). The segment at 118 to 147 (DYIQCPYCQRRFNENAADRHINFCKEQAAR) adopts a C2HC/C3H-type 2 zinc-finger fold. Zn(2+)-binding residues include C122, C125, H137, and C141. The segment at 149–225 (SNKGKFSTDS…NKPQTLSPSH (77 aa)) is disordered. The span at 176–187 (SNPPGIPSSGSS) shows a compositional bias: low complexity. Polar residues-rich tracts occupy residues 188–198 (RLPQPSTTSKT) and 206–223 (KASS…TLSP). S222 carries the phosphoserine modification. T243 is modified (phosphothreonine). Residue S291 is modified to Phosphoserine.

It belongs to the ZC2HC1 family. Zn(2+) serves as cofactor.

This is Zinc finger C2HC domain-containing protein 1A (Zc2hc1a) from Mus musculus (Mouse).